The following is a 175-amino-acid chain: MPLVEKRYAQALLELSGSDINSIKEEFGDFTNLYNSDKDFRDFLNNPVVKTDKKQALIRSVFTDRLSKNMLNMILLLVSKHRTAEIPGIFNQFIQMANETANVLDMKIIMAAPMDEVQLETLREKFKKKYNAVAVNSTEIVDESLIGGLKVIIGDKVYDGSVKGRIESLTEIVSV.

Belongs to the ATPase delta chain family. F-type ATPases have 2 components, F(1) - the catalytic core - and F(0) - the membrane proton channel. F(1) has five subunits: alpha(3), beta(3), gamma(1), delta(1), epsilon(1). F(0) has three main subunits: a(1), b(2) and c(10-14). The alpha and beta chains form an alternating ring which encloses part of the gamma chain. F(1) is attached to F(0) by a central stalk formed by the gamma and epsilon chains, while a peripheral stalk is formed by the delta and b chains.

It is found in the cell membrane. F(1)F(0) ATP synthase produces ATP from ADP in the presence of a proton or sodium gradient. F-type ATPases consist of two structural domains, F(1) containing the extramembraneous catalytic core and F(0) containing the membrane proton channel, linked together by a central stalk and a peripheral stalk. During catalysis, ATP synthesis in the catalytic domain of F(1) is coupled via a rotary mechanism of the central stalk subunits to proton translocation. Functionally, this protein is part of the stalk that links CF(0) to CF(1). It either transmits conformational changes from CF(0) to CF(1) or is implicated in proton conduction. This is ATP synthase subunit delta from Ruminiclostridium cellulolyticum (strain ATCC 35319 / DSM 5812 / JCM 6584 / H10) (Clostridium cellulolyticum).